The following is a 318-amino-acid chain: Deoxyhypusine hydroxylase (318 aa).

Residues His65, Glu66, His98, and Glu99 each coordinate Fe cation. HEAT-like PBS-type repeat units follow at residues 96 to 122 (VRHE…YYKE), 194 to 220 (YRYR…GFKD), 225 to 251 (FRHE…VLEN), and 258 to 284 (VRHE…FSKD). Residues His227, Glu228, His260, and Glu261 each coordinate Fe cation.

It belongs to the deoxyhypusine hydroxylase family. It depends on Fe(2+) as a cofactor.

The protein localises to the cytoplasm. Its subcellular location is the nucleus. The enzyme catalyses [eIF5A protein]-deoxyhypusine + AH2 + O2 = [eIF5A protein]-hypusine + A + H2O. The protein operates within protein modification; eIF5A hypusination. In terms of biological role, catalyzes the hydroxylation of the N(6)-(4-aminobutyl)-L-lysine intermediate to form hypusine, an essential post-translational modification only found in mature eIF-5A factor. The polypeptide is Deoxyhypusine hydroxylase (lia1) (Schizosaccharomyces pombe (strain 972 / ATCC 24843) (Fission yeast)).